Consider the following 346-residue polypeptide: Peripherin-2 (346 aa).

At 1–24 (MALLKVKFDQKKRVKLAQGLWLMN) the chain is on the cytoplasmic side. The chain crosses the membrane as a helical span at residues 25–43 (WLSVLAGIVIFSLGLFLKI). At 44–61 (ELRKRSDVMNNSESHFVP) the chain is on the lumenal side. A glycan (N-linked (GlcNAc...) asparagine) is linked at Asn53. Residues 62–80 (NSLIGMGVLSCVFNSLAGK) traverse the membrane as a helical segment. Topologically, residues 81 to 99 (ICYDALDPSKYAKWKPWLK) are cytoplasmic. A helical transmembrane segment spans residues 100–123 (SYLVVCVLFNIVLFLVALCCFLMR). The Lumenal portion of the chain corresponds to 124 to 264 (GSLESTLAQG…LSYYGSLMNS (141 aa)). Asn229 carries an N-linked (GlcNAc...) asparagine glycan. Residues 265–290 (MGAVTLLVWLFEVSITIGLRYLHTAL) traverse the membrane as a helical segment. Topologically, residues 291–346 (EGVSNPEDLECESEGWLLEKSVSETWKAFLESLKKLGKSNQVEAEGADAGQAPEAG) are cytoplasmic. An interaction with MREG region spans residues 341–346 (QAPEAG).

Belongs to the PRPH2/ROM1 family. As to quaternary structure, homodimer; disulfide-linked. Forms a homotetramer. Forms a heterotetramer with ROM1. Homotetramer and heterotetramer core complexes go on to form higher order complexes by formation of intermolecular disulfide bonds. Interacts with MREG. Interacts with STX3. Interacts with SNAP25. As to expression, retina (photoreceptor). In rim region of ROS (rod outer segment) disks.

It localises to the membrane. It is found in the cell projection. The protein resides in the cilium. Its subcellular location is the photoreceptor outer segment. The protein localises to the photoreceptor inner segment. Functionally, essential for retina photoreceptor outer segment disk morphogenesis, may also play a role with ROM1 in the maintenance of outer segment disk structure. Required for the maintenance of retinal outer nuclear layer thickness. Required for the correct development and organization of the photoreceptor inner segment. This Felis catus (Cat) protein is Peripherin-2 (PRPH2).